The sequence spans 469 residues: 3-isopropylmalate dehydratase large subunit (469 aa).

Residues cysteine 349, cysteine 410, and cysteine 413 each contribute to the [4Fe-4S] cluster site.

It belongs to the aconitase/IPM isomerase family. LeuC type 1 subfamily. In terms of assembly, heterodimer of LeuC and LeuD. The cofactor is [4Fe-4S] cluster.

The catalysed reaction is (2R,3S)-3-isopropylmalate = (2S)-2-isopropylmalate. Its pathway is amino-acid biosynthesis; L-leucine biosynthesis; L-leucine from 3-methyl-2-oxobutanoate: step 2/4. In terms of biological role, catalyzes the isomerization between 2-isopropylmalate and 3-isopropylmalate, via the formation of 2-isopropylmaleate. The polypeptide is 3-isopropylmalate dehydratase large subunit (Neisseria meningitidis serogroup A / serotype 4A (strain DSM 15465 / Z2491)).